The primary structure comprises 938 residues: Isoleucine--tRNA ligase (938 aa).

The short motif at 58-68 is the 'HIGH' region element; that stretch reads PYANGSIHIGH. An N6-acetyllysine modification is found at K183. E561 is a binding site for L-isoleucyl-5'-AMP. Residues 602 to 606 carry the 'KMSKS' region motif; it reads KMSKS. K605 is an ATP binding site. Zn(2+) is bound by residues C901, C904, C921, and C924.

It belongs to the class-I aminoacyl-tRNA synthetase family. IleS type 1 subfamily. Monomer. Zn(2+) is required as a cofactor.

The protein localises to the cytoplasm. The catalysed reaction is tRNA(Ile) + L-isoleucine + ATP = L-isoleucyl-tRNA(Ile) + AMP + diphosphate. Catalyzes the attachment of isoleucine to tRNA(Ile). As IleRS can inadvertently accommodate and process structurally similar amino acids such as valine, to avoid such errors it has two additional distinct tRNA(Ile)-dependent editing activities. One activity is designated as 'pretransfer' editing and involves the hydrolysis of activated Val-AMP. The other activity is designated 'posttransfer' editing and involves deacylation of mischarged Val-tRNA(Ile). The protein is Isoleucine--tRNA ligase of Escherichia coli (strain ATCC 8739 / DSM 1576 / NBRC 3972 / NCIMB 8545 / WDCM 00012 / Crooks).